Consider the following 217-residue polypeptide: uncharacterized protein (217 aa).

The helical transmembrane segment at valine 26–alanine 48 threads the bilayer.

It localises to the membrane. This is an uncharacterized protein from Archaeoglobus fulgidus (strain ATCC 49558 / DSM 4304 / JCM 9628 / NBRC 100126 / VC-16).